The chain runs to 401 residues: Imidazolonepropionase (401 aa).

Fe(3+) is bound by residues His-66 and His-68. The Zn(2+) site is built by His-66 and His-68. Residues Arg-75, Tyr-138, and His-171 each contribute to the 4-imidazolone-5-propanoate site. Tyr-138 contacts N-formimidoyl-L-glutamate. A Fe(3+)-binding site is contributed by His-236. His-236 contributes to the Zn(2+) binding site. 4-imidazolone-5-propanoate is bound at residue Gln-239. Asp-311 serves as a coordination point for Fe(3+). Asp-311 is a binding site for Zn(2+). N-formimidoyl-L-glutamate is bound by residues Asn-313 and Gly-315. 4-imidazolone-5-propanoate is bound at residue Thr-316.

The protein belongs to the metallo-dependent hydrolases superfamily. HutI family. Zn(2+) is required as a cofactor. The cofactor is Fe(3+).

Its subcellular location is the cytoplasm. The enzyme catalyses 4-imidazolone-5-propanoate + H2O = N-formimidoyl-L-glutamate. It participates in amino-acid degradation; L-histidine degradation into L-glutamate; N-formimidoyl-L-glutamate from L-histidine: step 3/3. In terms of biological role, catalyzes the hydrolytic cleavage of the carbon-nitrogen bond in imidazolone-5-propanoate to yield N-formimidoyl-L-glutamate. It is the third step in the universal histidine degradation pathway. In Acinetobacter baumannii (strain AB307-0294), this protein is Imidazolonepropionase.